The sequence spans 127 residues: UPF0212 protein VNG_1264C (127 aa).

Belongs to the UPF0212 family.

This chain is UPF0212 protein VNG_1264C, found in Halobacterium salinarum (strain ATCC 700922 / JCM 11081 / NRC-1) (Halobacterium halobium).